Reading from the N-terminus, the 687-residue chain is Glycine--tRNA ligase beta subunit (687 aa).

This sequence belongs to the class-II aminoacyl-tRNA synthetase family. In terms of assembly, tetramer of two alpha and two beta subunits.

The protein localises to the cytoplasm. The catalysed reaction is tRNA(Gly) + glycine + ATP = glycyl-tRNA(Gly) + AMP + diphosphate. This is Glycine--tRNA ligase beta subunit from Trichlorobacter lovleyi (strain ATCC BAA-1151 / DSM 17278 / SZ) (Geobacter lovleyi).